Consider the following 343-residue polypeptide: Cyclic AMP-AMP-AMP synthase (343 aa).

It belongs to the CD-NTase family. D01 subfamily. Mg(2+) is required as a cofactor.

The enzyme catalyses 3 ATP = 2',3',3'-c-tri-AMP + 3 diphosphate. Cyclic nucleotide synthase (second messenger synthase) of a CBASS antivirus system. CBASS (cyclic oligonucleotide-based antiphage signaling system) provides immunity against bacteriophage. The CD-NTase protein synthesizes cyclic nucleotides in response to infection; these serve as specific second messenger signals. The signals activate a diverse range of effectors, leading to bacterial cell death and thus abortive phage infection. A type II-C(AAAA) CBASS system. Its function is as follows. Cyclic trinucleotide synthase that catalyzes the synthesis of 2',3',3'-cyclic AMP-AMP-AMP (2',3',3'-c-tri-AMP or 2'3'3'-cAAA) as the major product, as well as another cyclic AMP(4) 2'-5'-linked minor product that acts as a second messenger for cell signal transduction. This chain is Cyclic AMP-AMP-AMP synthase, found in Acinetobacter sp. (strain ATCC 27244 / 9458).